The primary structure comprises 358 residues: Myb family transcription factor IPN2 (358 aa).

The tract at residues 1 to 20 (MERMFPPKKPSTMNSHDRPM) is disordered. The HTH myb-type domain maps to 32 to 92 (TDPKPRLRWT…HLQKFRLGKQ (61 aa)). The segment at residues 63 to 88 (PKTIMRVMGVKGLTLYHLKSHLQKFR) is a DNA-binding region (H-T-H motif). The stretch at 127-171 (NMNEMQIEVQRRLHEQLEVQKHLQLRIEAQGKYMQSILEKAYQTL) forms a coiled coil. The LHEQLE signature appears at 139-144 (LHEQLE). The interval 310 to 358 (IYDSKPEEKKFDASMKLERPSPRRAPLGERMSPMITTGTMAQGRSSPFG) is disordered. Basic and acidic residues predominate over residues 311-330 (YDSKPEEKKFDASMKLERPS). The span at 343–358 (MITTGTMAQGRSSPFG) shows a compositional bias: polar residues.

Belongs to the MYB-CC family. As to quaternary structure, interacts with NSP2. As to expression, expressed in leaves, stems, nodules and roots.

The protein localises to the nucleus. Functionally, transcriptional regulator required for Nod-factor-induced gene expression. Transcription activator involved in the induction of NIN and ENOD40 genes, which are required for rhizobial infection and early nodule development. Possesses strong transactivation activity in vitro. Does not seem to contribute to the early steps of the arbuscular mycorrhizal fungus infection and colonization processes in roots. The sequence is that of Myb family transcription factor IPN2 from Lotus japonicus (Lotus corniculatus var. japonicus).